The following is a 601-amino-acid chain: Sestrin homolog (601 aa).

A compositionally biased stretch (polar residues) spans methionine 1–glutamine 11. The interval methionine 1 to asparagine 58 is disordered. N-linked (GlcNAc...) asparagine glycosylation occurs at asparagine 20. The segment covering serine 21–serine 32 has biased composition (low complexity). Residues asparagine 322 and asparagine 330 are each glycosylated (N-linked (GlcNAc...) asparagine). The disordered stretch occupies residues arginine 355–serine 425. Residues leucine 368–glycine 379 are compositionally biased toward basic and acidic residues. Residues aspartate 380–serine 425 show a composition bias toward low complexity. Residues asparagine 387, asparagine 388, asparagine 406, asparagine 438, and asparagine 499 are each glycosylated (N-linked (GlcNAc...) asparagine).

Belongs to the sestrin family.

It is found in the nucleus. The protein localises to the cytoplasm. Its function is as follows. May function as a negative feedback regulator of TOR function. This is Sestrin homolog from Dictyostelium discoideum (Social amoeba).